We begin with the raw amino-acid sequence, 336 residues long: Abasic site processing protein HMCES (336 aa).

The Nucleophile role is filled by Cys2. Residue Cys2 is modified to Thiazolidine linkage to a ring-opened DNA abasic site. Residues 29-38 are compositionally biased toward basic and acidic residues; the sequence is QPEWLREGRY. The segment at 29 to 52 is disordered; the sequence is QPEWLREGRYRPSYNKGPQSSGPV. The active site involves Glu127. Residues 283–336 form a disordered region; it reads LKSSQEGSPQKKEDTLPRWKSQFIHSPSPKKSSAGILRQWLGQEGGPPAKKQKA.

Belongs to the SOS response-associated peptidase family.

The protein resides in the chromosome. Formation and reversal of DNA-protein cross-link depends on DNA context. Catalyzes formation of the thiazolidine linkage in presence of abasic sites in single-stranded DNA. Mediates the reversal of the thiazolidine cross-link in presence of double stranded DNA. In terms of biological role, sensor of abasic sites in single-stranded DNA (ssDNA) required to preserve genome integrity by promoting error-free repair of abasic sites. Acts as an enzyme that recognizes and binds abasic sites in ssDNA at replication forks and chemically modifies the lesion by forming a covalent cross-link with DNA: forms a stable thiazolidine linkage between a ring-opened abasic site and the alpha-amino and sulfhydryl substituents of its N-terminal catalytic cysteine residue. The HMCES DNA-protein cross-link is then either reversed or degraded. HMCES is able to catalyze the reversal of its thiazolidine cross-link and cycle between a cross-link and a non-cross-linked state depending on DNA context: mediates self-reversal of the thiazolidine cross-link in double stranded DNA, allowing APEX1 to initiate downstream repair of abasic sites. The HMCES DNA-protein cross-link can also be degraded by the SPRTN metalloprotease following unfolding by the BRIP1/FANCJ helicase. Promotes error-free repair of abasic sites by protecting abasic sites from translesion synthesis (TLS) polymerases and endonucleases that are error-prone and would generate mutations and double-strand breaks. Acts as a protease: mediates autocatalytic processing of its N-terminal methionine in order to expose the catalytic cysteine. The HMCES DNA-protein cross-link is then either reversed or degraded. According to a model, the HMCES DNA-protein cross-link. The polypeptide is Abasic site processing protein HMCES (Gallus gallus (Chicken)).